A 498-amino-acid chain; its full sequence is Lysine--tRNA ligase (498 aa).

2 residues coordinate Mg(2+): Glu-401 and Glu-408.

The protein belongs to the class-II aminoacyl-tRNA synthetase family. As to quaternary structure, homodimer. Requires Mg(2+) as cofactor.

It localises to the cytoplasm. The enzyme catalyses tRNA(Lys) + L-lysine + ATP = L-lysyl-tRNA(Lys) + AMP + diphosphate. The sequence is that of Lysine--tRNA ligase from Dehalococcoides mccartyi (strain CBDB1).